A 458-amino-acid polypeptide reads, in one-letter code: uncharacterized protein (458 aa).

The next 12 helical transmembrane spans lie at 26–46 (LIAI…KSIH), 47–67 (FAGP…FLIM), 95–115 (AAFI…MADL), 125–145 (WLPG…LLIM), 160–180 (FALI…VMIF), 208–228 (GFIL…LVGL), 251–271 (VLLF…WDII), 278–298 (FVQV…NFVV), 342–362 (ALFF…IMPE), 365–385 (FTLI…ITVI), 409–429 (PFTN…LALA), and 432–452 (TRVS…IYKV).

Belongs to the amino acid-polyamine-organocation (APC) superfamily.

The protein resides in the cell membrane. Its function is as follows. Probable amino-acid or metabolite transport protein. This is an uncharacterized protein from Bacillus subtilis (strain 168).